A 238-amino-acid polypeptide reads, in one-letter code: Endonuclease V (238 aa).

Mg(2+) contacts are provided by D46 and D116.

It belongs to the endonuclease V family. Requires Mg(2+) as cofactor.

The protein resides in the cytoplasm. The catalysed reaction is Endonucleolytic cleavage at apurinic or apyrimidinic sites to products with a 5'-phosphate.. Functionally, DNA repair enzyme involved in the repair of deaminated bases. Selectively cleaves double-stranded DNA at the second phosphodiester bond 3' to a deoxyinosine leaving behind the intact lesion on the nicked DNA. The chain is Endonuclease V from Bacillus velezensis (strain DSM 23117 / BGSC 10A6 / LMG 26770 / FZB42) (Bacillus amyloliquefaciens subsp. plantarum).